Consider the following 352-residue polypeptide: Gamma-aminobutyric acid-binding protein (352 aa).

A signal peptide spans 1–28 (MFKSLHQYAHVFSRLSLFGLAFAAAAQA).

The protein belongs to the bacterial solute-binding protein 1 family.

It is found in the periplasm. Functionally, binds specifically gamma-aminobutyric acid (GABA) with nanomolar affinity. Does not bind structurally related compounds such as 4-aminovaleric acid, spermidine, histamine and butyric acid. The chain is Gamma-aminobutyric acid-binding protein from Pseudomonas aeruginosa (strain ATCC 15692 / DSM 22644 / CIP 104116 / JCM 14847 / LMG 12228 / 1C / PRS 101 / PAO1).